Reading from the N-terminus, the 490-residue chain is Protein OrfX3 (490 aa).

The protein belongs to the TULIP P47 family. In terms of assembly, part of a crude toxin extract that includes BoNTA2/NTNH, P47, OrfX2 and OrfX3; OrfX1 was not detected. Post-translationally, shorter forms of this protein are seen in vivo.

Part of a botulinum neurotoxin type A2 (BoNT) locus; may be part of a progenitor toxin complex required to protect BoNT during its passage through the host gastrointestinal tract. The chain is Protein OrfX3 (orfX3) from Clostridium botulinum (strain Kyoto / Type A2).